The sequence spans 266 residues: Thymidylate synthase (266 aa).

Arg-24 contributes to the dUMP binding site. (6R)-5,10-methylene-5,6,7,8-tetrahydrofolate is bound at residue His-54. 129-130 (RR) is a dUMP binding site. Cys-149 (nucleophile) is an active-site residue. DUMP-binding positions include 169 to 172 (RSAD), Asn-180, and 210 to 212 (HIY). Asp-172 provides a ligand contact to (6R)-5,10-methylene-5,6,7,8-tetrahydrofolate. Ala-265 serves as a coordination point for (6R)-5,10-methylene-5,6,7,8-tetrahydrofolate.

It belongs to the thymidylate synthase family. Bacterial-type ThyA subfamily. Homodimer.

The protein localises to the cytoplasm. It carries out the reaction dUMP + (6R)-5,10-methylene-5,6,7,8-tetrahydrofolate = 7,8-dihydrofolate + dTMP. The protein operates within pyrimidine metabolism; dTTP biosynthesis. In terms of biological role, catalyzes the reductive methylation of 2'-deoxyuridine-5'-monophosphate (dUMP) to 2'-deoxythymidine-5'-monophosphate (dTMP) while utilizing 5,10-methylenetetrahydrofolate (mTHF) as the methyl donor and reductant in the reaction, yielding dihydrofolate (DHF) as a by-product. This enzymatic reaction provides an intracellular de novo source of dTMP, an essential precursor for DNA biosynthesis. This Mycobacterium bovis (strain ATCC BAA-935 / AF2122/97) protein is Thymidylate synthase.